An 87-amino-acid chain; its full sequence is Small ribosomal subunit protein bS20 (87 aa).

Positions 1–26 are disordered; that stretch reads MANTAQAKKRVRQNIKQRERNSGLRS.

This sequence belongs to the bacterial ribosomal protein bS20 family.

Its function is as follows. Binds directly to 16S ribosomal RNA. The protein is Small ribosomal subunit protein bS20 of Nitrosomonas eutropha (strain DSM 101675 / C91 / Nm57).